Consider the following 421-residue polypeptide: Acetate kinase (421 aa).

N7 serves as a coordination point for Mg(2+). ATP is bound at residue K14. Position 91 (R91) interacts with substrate. D148 acts as the Proton donor/acceptor in catalysis. Residues 208 to 212 (HIGNG) and 283 to 285 (DRR) each bind ATP. E387 lines the Mg(2+) pocket.

Belongs to the acetokinase family. As to quaternary structure, homodimer. Requires Mg(2+) as cofactor. Mn(2+) serves as cofactor.

The protein resides in the cytoplasm. The enzyme catalyses acetate + ATP = acetyl phosphate + ADP. The protein operates within metabolic intermediate biosynthesis; acetyl-CoA biosynthesis; acetyl-CoA from acetate: step 1/2. Catalyzes the formation of acetyl phosphate from acetate and ATP. Can also catalyze the reverse reaction. The protein is Acetate kinase of Geobacter metallireducens (strain ATCC 53774 / DSM 7210 / GS-15).